A 403-amino-acid chain; its full sequence is Histidine--tRNA ligase (403 aa).

This sequence belongs to the class-II aminoacyl-tRNA synthetase family. Homodimer.

The protein localises to the cytoplasm. It carries out the reaction tRNA(His) + L-histidine + ATP = L-histidyl-tRNA(His) + AMP + diphosphate + H(+). In Sulfurimonas denitrificans (strain ATCC 33889 / DSM 1251) (Thiomicrospira denitrificans (strain ATCC 33889 / DSM 1251)), this protein is Histidine--tRNA ligase.